The following is a 450-amino-acid chain: Serine--tRNA ligase, cytoplasmic (450 aa).

Position 238 to 240 (238 to 240 (TSE)) interacts with L-serine. ATP contacts are provided by residues 271-273 (RRE) and Val287. Glu294 is an L-serine binding site. 358–361 (ELVS) lines the ATP pocket. Thr396 provides a ligand contact to L-serine.

This sequence belongs to the class-II aminoacyl-tRNA synthetase family. Type-1 seryl-tRNA synthetase subfamily. As to quaternary structure, homodimer. The tRNA molecule binds across the dimer.

The protein resides in the cytoplasm. It localises to the cytosol. It carries out the reaction tRNA(Ser) + L-serine + ATP = L-seryl-tRNA(Ser) + AMP + diphosphate + H(+). Its function is as follows. Catalyzes the attachment of serine to tRNA(Ser) in a two-step reaction: serine is first activated by ATP to form Ser-AMP and then transferred to the acceptor end of tRNA(Ser). The polypeptide is Serine--tRNA ligase, cytoplasmic (Schizosaccharomyces pombe (strain 972 / ATCC 24843) (Fission yeast)).